Here is a 232-residue protein sequence, read N- to C-terminus: Thiamine import ATP-binding protein ThiQ (232 aa).

The region spanning 2-230 (LKLTDITWLY…KASASAILGI (229 aa)) is the ABC transporter domain. ATP is bound at residue 32–39 (GPSGAGKS).

It belongs to the ABC transporter superfamily. Thiamine importer (TC 3.A.1.19.1) family. The complex is composed of two ATP-binding proteins (ThiQ), two transmembrane proteins (ThiP) and a solute-binding protein (ThiB).

It localises to the cell inner membrane. It carries out the reaction thiamine(out) + ATP + H2O = thiamine(in) + ADP + phosphate + H(+). In terms of biological role, part of the ABC transporter complex ThiBPQ involved in thiamine import. Responsible for energy coupling to the transport system. This is Thiamine import ATP-binding protein ThiQ from Shigella flexneri serotype 5b (strain 8401).